Consider the following 424-residue polypeptide: Transcription regulator spe-44 (424 aa).

The region spanning Pro65–Asp150 is the SAND domain. Disordered regions lie at residues Ala178–Gln228 and Glu371–Phe394. A compositionally biased stretch (basic and acidic residues) spans Tyr192–Lys210. The span at Pro378 to Leu388 shows a compositional bias: polar residues.

The protein resides in the chromosome. The protein localises to the nucleus. Functionally, transcription factor which controls spermatogenesis and sperm cell fate by regulation of sperm gene expression. The polypeptide is Transcription regulator spe-44 (Caenorhabditis elegans).